The following is a 467-amino-acid chain: Ribulose bisphosphate carboxylase large chain (467 aa).

A propeptide spanning residues 1-2 (MS) is cleaved from the precursor. Position 3 is an N-acetylproline (Pro-3). Lys-14 is subject to N6,N6,N6-trimethyllysine. Asn-123 and Thr-173 together coordinate substrate. Lys-175 (proton acceptor) is an active-site residue. Position 177 (Lys-177) interacts with substrate. Mg(2+) is bound by residues Lys-201, Asp-203, and Glu-204. Lys-201 carries the N6-carboxylysine modification. The active-site Proton acceptor is His-294. Substrate contacts are provided by Arg-295, His-327, and Ser-379.

This sequence belongs to the RuBisCO large chain family. Type I subfamily. As to quaternary structure, heterohexadecamer of 8 large chains and 8 small chains; disulfide-linked. The disulfide link is formed within the large subunit homodimers. Mg(2+) is required as a cofactor. The disulfide bond which can form in the large chain dimeric partners within the hexadecamer appears to be associated with oxidative stress and protein turnover.

Its subcellular location is the plastid. The protein resides in the chloroplast. The enzyme catalyses 2 (2R)-3-phosphoglycerate + 2 H(+) = D-ribulose 1,5-bisphosphate + CO2 + H2O. The catalysed reaction is D-ribulose 1,5-bisphosphate + O2 = 2-phosphoglycolate + (2R)-3-phosphoglycerate + 2 H(+). Its function is as follows. RuBisCO catalyzes two reactions: the carboxylation of D-ribulose 1,5-bisphosphate, the primary event in carbon dioxide fixation, as well as the oxidative fragmentation of the pentose substrate in the photorespiration process. Both reactions occur simultaneously and in competition at the same active site. This is Ribulose bisphosphate carboxylase large chain from Calamus usitatus (Palm tree).